A 1128-amino-acid chain; its full sequence is Testis-expressed protein 2 (1128 aa).

3 disordered regions span residues 1–28 (MTSLNGRHAEKTIDMPKPSAPKVHVQRS), 71–99 (AKEDLYLESQGGHDPAGPVSTAPADGLSV), and 130–279 (PLAL…FFKV). Residues 130 to 186 (PLALSPGSSSSGPLASSPSVSSLSEQKTSSSSPLSSPSKSPVLSSSASSSALSSAKP) show a composition bias toward low complexity. At serine 195 the chain carries Phosphoserine. Positions 248–274 (QFTQPRNTGGDSKTAPSSPLTSPSDTR) are enriched in polar residues. Threonine 261 carries the phosphothreonine modification. Phosphoserine occurs at positions 264, 265, 269, and 294. Residues 345–387 (KEEEGDSEGEGYGSDSNTSRSDHLKPTEDASKEVEPKGSQASS) form a disordered region. Residues 364 to 380 (RSDHLKPTEDASKEVEP) are compositionally biased toward basic and acidic residues. 2 consecutive transmembrane segments (helical) span residues 473–493 (TLGFFIMCVYAYLILPLPYYM) and 495–515 (GLFLGVGLGFMTAVCMIWFFT). Residue asparagine 593 is glycosylated (N-linked (GlcNAc...) asparagine). Over residues 645–671 (SKAQSDKEATEEKPPPEKELPSEDLKK) the composition is skewed to basic and acidic residues. 4 disordered regions span residues 645 to 688 (SKAQ…DPIL), 716 to 765 (RKPA…QKEL), 787 to 821 (QDNRSPHRSPVQSAESSPTASKKLPEAPPSEEEEQ), and 945 to 981 (ADSDEESSSAGSSEEDDPPEPTAGDKQPLPGAEGYVG). A phosphoserine mark is found at serine 733, serine 739, serine 745, serine 749, serine 752, serine 799, and serine 816. Residues 736-751 (SSPSGHLSHSRSSSKG) show a composition bias toward low complexity. Positions 796–806 (PVQSAESSPTA) are enriched in polar residues. Positions 817 to 1102 (EEEEQEAWVN…MPNMDDVYIP (286 aa)) constitute an SMP-LTD domain. Residues 946 to 963 (DSDEESSSAGSSEEDDPP) are compositionally biased toward acidic residues.

The protein resides in the endoplasmic reticulum membrane. Its subcellular location is the nucleus membrane. During endoplasmic reticulum (ER) stress or when cellular ceramide levels increase, may induce contacts between the ER and medial-Golgi complex to facilitate non-vesicular transport of ceramides from the ER to the Golgi complex where they are converted to complex sphingolipids, preventing toxic ceramide accumulation. This Mus musculus (Mouse) protein is Testis-expressed protein 2 (Tex2).